We begin with the raw amino-acid sequence, 330 residues long: Aspartate--ammonia ligase (330 aa).

It belongs to the class-II aminoacyl-tRNA synthetase family. AsnA subfamily.

The protein resides in the cytoplasm. It catalyses the reaction L-aspartate + NH4(+) + ATP = L-asparagine + AMP + diphosphate + H(+). It participates in amino-acid biosynthesis; L-asparagine biosynthesis; L-asparagine from L-aspartate (ammonia route): step 1/1. The sequence is that of Aspartate--ammonia ligase from Streptococcus pneumoniae serotype 2 (strain D39 / NCTC 7466).